The chain runs to 262 residues: Acyl-[acyl-carrier-protein]--UDP-N-acetylglucosamine O-acyltransferase (262 aa).

It belongs to the transferase hexapeptide repeat family. LpxA subfamily. Homotrimer.

Its subcellular location is the cytoplasm. The enzyme catalyses a (3R)-hydroxyacyl-[ACP] + UDP-N-acetyl-alpha-D-glucosamine = a UDP-3-O-[(3R)-3-hydroxyacyl]-N-acetyl-alpha-D-glucosamine + holo-[ACP]. The protein operates within glycolipid biosynthesis; lipid IV(A) biosynthesis; lipid IV(A) from (3R)-3-hydroxytetradecanoyl-[acyl-carrier-protein] and UDP-N-acetyl-alpha-D-glucosamine: step 1/6. Involved in the biosynthesis of lipid A, a phosphorylated glycolipid that anchors the lipopolysaccharide to the outer membrane of the cell. This is Acyl-[acyl-carrier-protein]--UDP-N-acetylglucosamine O-acyltransferase from Herminiimonas arsenicoxydans.